The following is a 151-amino-acid chain: Large ribosomal subunit protein uL22 (151 aa).

The protein belongs to the universal ribosomal protein uL22 family. In terms of assembly, part of the 50S ribosomal subunit.

Its function is as follows. This protein binds specifically to 23S rRNA. It makes multiple contacts with different domains of the 23S rRNA in the assembled 50S subunit and ribosome. In terms of biological role, the globular domain of the protein is located near the polypeptide exit tunnel on the outside of the subunit, while an extended beta-hairpin is found that lines the wall of the exit tunnel in the center of the 70S ribosome. The sequence is that of Large ribosomal subunit protein uL22 from Thermofilum pendens (strain DSM 2475 / Hrk 5).